The primary structure comprises 898 residues: Netrin receptor UNC5A (898 aa).

The first 25 residues, 1 to 25 (MAVRPGLWPALLGIVLTAWLRGSGA), serve as a signal peptide directing secretion. Topologically, residues 26–361 (QQSATVANPV…TSSGPEDVAL (336 aa)) are extracellular. The Ig-like domain maps to 44–141 (PHFLVEPEDV…SGTTKSQKAY (98 aa)). Cystine bridges form between C65–C126, C77–C124, and C170–C221. Residues N107 and N218 are each glycosylated (N-linked (GlcNAc...) asparagine). The Ig-like C2-type domain maps to 155–234 (PLAKEVSLEQ…NIVARRRSAS (80 aa)). TSP type-1 domains are found at residues 242 to 296 (NGGW…TLCP) and 298 to 350 (DGSW…DLCL). W245, W248, and W251 each carry a C-linked (Man) tryptophan glycan. 3 disulfides stabilise this stretch: C254/C291, C258/C295, and C269/C281. 2 C-linked (Man) tryptophan glycosylation sites follow: W301 and W304. 3 disulfides stabilise this stretch: C310–C344, C314–C349, and C322–C334. N-linked (GlcNAc...) asparagine glycosylation occurs at N343. A helical transmembrane segment spans residues 362-382 (YIGLVAVAVCLILLLLVLVLI). Over 383–898 (YCRKKEGLDS…GLFTVSEAEC (516 aa)) the chain is Cytoplasmic. Positions 497 to 640 (NMAYGTFNFL…LGRFALVGEA (144 aa)) constitute a ZU5 domain. Residues 661 to 679 (SLEYNIRVYCLHDTHDALK) form an interaction with DCC region. The Death domain maps to 817–897 (QKIITSLDPP…AGLFTVSEAE (81 aa)).

It belongs to the unc-5 family. In terms of assembly, homodimer and homooligomer. Interacts with the cytoplasmic part of DCC. Interacts with MAGED1. Interacts with PRKCABP, possibly mediating some interaction with PKC. Interacts (via extracellular domain) with FLRT2 (via extracellular domain). Interacts (via extracellular domain) with FLRT3 (via extracellular domain). Phosphorylated on cytoplasmic tyrosine residues. Phosphorylated by PKC in vitro. In terms of processing, proteolytically cleaved by caspases during apoptosis. The cleavage does not take place when the receptor is associated with netrin ligand. Its cleavage by caspases is required to induce apoptosis. Post-translationally, the two extracellular TSRs of UNC5A contain WxxWxxWxxC motifs that can be C-mannosylated on all tryptophans. DPY19L1 preferentially mannosylates the first two tryptophans and DPY19L3 prefers the third. C-mannosylation by DPY19L1 is required for transport of UNC5A from the endoplasmic reticulum to the cell surface. As to expression, restricted to central nervous system.

The protein resides in the cell membrane. It is found in the membrane raft. The protein localises to the cell projection. Its subcellular location is the neuron projection. In terms of biological role, receptor for netrin required for axon guidance. Functions in the netrin signaling pathway and promotes neurite outgrowth in response to NTN1. Mediates axon repulsion of neuronal growth cones in the developing nervous system in response to netrin. Axon repulsion in growth cones may be mediated by its association with DCC that may trigger signaling for repulsion. It also acts as a dependence receptor required for apoptosis induction when not associated with netrin ligand. In Mus musculus (Mouse), this protein is Netrin receptor UNC5A (Unc5a).